We begin with the raw amino-acid sequence, 918 residues long: UPF0182 protein CPR_0011 (918 aa).

The next 7 membrane-spanning stretches (helical) occupy residues 8–28 (TVLI…NFII), 46–66 (LIAI…VIAI), 91–111 (FLLS…TTQW), 151–171 (AISL…ALGF), 200–220 (LAVL…LKSY), 243–263 (IFYK…FISI), and 271–291 (IIIS…VAIF).

It belongs to the UPF0182 family.

The protein localises to the cell membrane. The chain is UPF0182 protein CPR_0011 from Clostridium perfringens (strain SM101 / Type A).